We begin with the raw amino-acid sequence, 345 residues long: N-acetyl-gamma-glutamyl-phosphate reductase (345 aa).

Residue C149 is part of the active site.

This sequence belongs to the NAGSA dehydrogenase family. Type 1 subfamily.

It is found in the cytoplasm. The catalysed reaction is N-acetyl-L-glutamate 5-semialdehyde + phosphate + NADP(+) = N-acetyl-L-glutamyl 5-phosphate + NADPH + H(+). It participates in amino-acid biosynthesis; L-arginine biosynthesis; N(2)-acetyl-L-ornithine from L-glutamate: step 3/4. Catalyzes the NADPH-dependent reduction of N-acetyl-5-glutamyl phosphate to yield N-acetyl-L-glutamate 5-semialdehyde. The polypeptide is N-acetyl-gamma-glutamyl-phosphate reductase (Bacillus subtilis (strain 168)).